A 527-amino-acid polypeptide reads, in one-letter code: Lysine--tRNA ligase (527 aa).

Positions 44 to 52 (PSGLPHIGT) match the 'HIGH' region motif. The short motif at 290–294 (KISKS) is the 'KMSKS' region element. An ATP-binding site is contributed by Lys-293.

The protein belongs to the class-I aminoacyl-tRNA synthetase family.

The protein resides in the cytoplasm. The enzyme catalyses tRNA(Lys) + L-lysine + ATP = L-lysyl-tRNA(Lys) + AMP + diphosphate. The protein is Lysine--tRNA ligase of Roseobacter denitrificans (strain ATCC 33942 / OCh 114) (Erythrobacter sp. (strain OCh 114)).